Here is a 332-residue protein sequence, read N- to C-terminus: Capsular polysaccharide phosphotransferase WcwK (332 aa).

This sequence belongs to the stealth family.

This is Capsular polysaccharide phosphotransferase WcwK (wcwK) from Streptococcus pneumoniae.